Here is a 134-residue protein sequence, read N- to C-terminus: Thionin-2.2 (134 aa).

A signal peptide spans 1-24; sequence MEGKTVISSLLIMSLVLAQIQVEA. Intrachain disulfides connect Cys-27-Cys-64, Cys-28-Cys-56, and Cys-40-Cys-50. Positions 71–134 are cleaved as a propeptide — acidic domain; it reads DILENSGDAV…GGSTAAVKSA (64 aa).

It belongs to the plant thionin (TC 1.C.44) family. As to expression, low basal expression in seedlings. Also detected in rosette leaves.

It is found in the secreted. In terms of biological role, thionins are small plant proteins which are toxic to animal cells. They seem to exert their toxic effect at the level of the cell membrane. Their precise function is not known. The protein is Thionin-2.2 (THI2.2) of Arabidopsis thaliana (Mouse-ear cress).